We begin with the raw amino-acid sequence, 437 residues long: Type II methyltransferase M.HgiBI (437 aa).

The SAM-dependent MTase C5-type domain occupies 4-431; that stretch reads FRFIDLFAGI…KALQCVKLFE (428 aa). The active site involves Cys75.

The protein belongs to the class I-like SAM-binding methyltransferase superfamily. C5-methyltransferase family.

It carries out the reaction a 2'-deoxycytidine in DNA + S-adenosyl-L-methionine = a 5-methyl-2'-deoxycytidine in DNA + S-adenosyl-L-homocysteine + H(+). A methylase that recognizes the double-stranded sequence 5'-GGWCC-3', methylates C-? on both strands, and protects the DNA from cleavage by the HgiBI endonuclease. This system is less active than isoschizomeric RM.HgiEI. This Herpetosiphon aurantiacus (Herpetosiphon giganteus) protein is Type II methyltransferase M.HgiBI.